Here is a 190-residue protein sequence, read N- to C-terminus: Probable nicotinate-nucleotide adenylyltransferase (190 aa).

It belongs to the NadD family.

It carries out the reaction nicotinate beta-D-ribonucleotide + ATP + H(+) = deamido-NAD(+) + diphosphate. The protein operates within cofactor biosynthesis; NAD(+) biosynthesis; deamido-NAD(+) from nicotinate D-ribonucleotide: step 1/1. In terms of biological role, catalyzes the reversible adenylation of nicotinate mononucleotide (NaMN) to nicotinic acid adenine dinucleotide (NaAD). This is Probable nicotinate-nucleotide adenylyltransferase from Staphylococcus saprophyticus subsp. saprophyticus (strain ATCC 15305 / DSM 20229 / NCIMB 8711 / NCTC 7292 / S-41).